A 214-amino-acid chain; its full sequence is Large ribosomal subunit protein uL3 (214 aa).

Positions G119–M159 are disordered.

The protein belongs to the universal ribosomal protein uL3 family. In terms of assembly, part of the 50S ribosomal subunit. Forms a cluster with proteins L14 and L19.

One of the primary rRNA binding proteins, it binds directly near the 3'-end of the 23S rRNA, where it nucleates assembly of the 50S subunit. This chain is Large ribosomal subunit protein uL3, found in Thermomicrobium roseum (strain ATCC 27502 / DSM 5159 / P-2).